Reading from the N-terminus, the 860-residue chain is Valine--tRNA ligase (860 aa).

Residues 43–53 carry the 'HIGH' region motif; that stretch reads PTVSGALHVGH. The disordered stretch occupies residues 469–491; the sequence is LPVDPSSDAPTGYQESQRNQPGG. Positions 574-578 match the 'KMSKS' region motif; that stretch reads KMSKS. Residue K577 coordinates ATP.

This sequence belongs to the class-I aminoacyl-tRNA synthetase family. ValS type 2 subfamily. In terms of assembly, monomer.

The protein resides in the cytoplasm. It carries out the reaction tRNA(Val) + L-valine + ATP = L-valyl-tRNA(Val) + AMP + diphosphate. In terms of biological role, catalyzes the attachment of valine to tRNA(Val). As ValRS can inadvertently accommodate and process structurally similar amino acids such as threonine, to avoid such errors, it has a 'posttransfer' editing activity that hydrolyzes mischarged Thr-tRNA(Val) in a tRNA-dependent manner. The sequence is that of Valine--tRNA ligase from Salinispora tropica (strain ATCC BAA-916 / DSM 44818 / JCM 13857 / NBRC 105044 / CNB-440).